Consider the following 271-residue polypeptide: Calretinin (271 aa).

6 consecutive EF-hand domains span residues 16–51, 63–98, 107–142, 151–186, 195–230, and 235–270; these read LTAS…LEKA, NFGE…EENF, GSSA…LLKK, KLQE…QENF, LTSE…LYEK, and MNIQ…SEPP. Ca(2+) is bound by residues D29, D31, N33, Y35, E40, D76, N78, D80, K82, E87, D120, D122, S124, Y126, E131, D164, N166, D168, K170, E175, D208, D210, S212, Y214, and E219. At Y214 the chain carries Phosphotyrosine.

Belongs to the calbindin family. In terms of tissue distribution, brain.

The protein localises to the synapse. It is found in the cell projection. It localises to the dendrite. In terms of biological role, calcium-binding protein involved in calcium homeostasis and signal transduction. It plays a critical role in buffering intracellular calcium levels and modulating calcium-dependent signaling pathways. Predominantly expressed in specific neuronal populations, influences synaptic plasticity and neuronal excitability, contributing to learning and memory. During embryonic development, it facilitates neuronal differentiation and maturation. The protein is Calretinin of Homo sapiens (Human).